The sequence spans 233 residues: 7-cyano-7-deazaguanine synthase (233 aa).

An ATP-binding site is contributed by 7–17; sequence LSGGLDSLVTS. Zn(2+)-binding residues include Cys-195, Cys-206, Cys-209, and Cys-212.

Belongs to the QueC family. Zn(2+) serves as cofactor.

The enzyme catalyses 7-carboxy-7-deazaguanine + NH4(+) + ATP = 7-cyano-7-deazaguanine + ADP + phosphate + H2O + H(+). Its pathway is purine metabolism; 7-cyano-7-deazaguanine biosynthesis. Catalyzes the ATP-dependent conversion of 7-carboxy-7-deazaguanine (CDG) to 7-cyano-7-deazaguanine (preQ(0)). The polypeptide is 7-cyano-7-deazaguanine synthase (Methanococcus vannielii (strain ATCC 35089 / DSM 1224 / JCM 13029 / OCM 148 / SB)).